The primary structure comprises 451 residues: Tubulin gamma-1 chain (451 aa).

Serine 131 is modified (phosphoserine; by BRSK1). Alanine 142–glycine 148 contributes to the GTP binding site.

Belongs to the tubulin family. As to quaternary structure, component of the gamma-tubulin ring complex (gTuRC) consisting of TUBGCP2, TUBGCP3, TUBGCP4, TUBGCP5 and TUBGCP6 and gamma-tubulin TUBG1 or TUBG2. TUBGCP2, TUBGCP3, TUBGCP4, TUBGCP5 and TUBGCP6 assemble in a 5:5:2:1:1 stoichiometry; each is associated with a gamma-tubulin, thereby arranging 14 gamma-tubulins in a helical manner. Gamma-tubulin at the first position is blocked by TUBGCP3 at the last position, allowing 13 protafilaments to grow into a microtubule. The gTuRC (via TUBGCP3 and TUBGCP6) interacts with ACTB and MZT1; the interactions form a luminal bridge that stabilizes the initial structure during complex assembly. The gTuRC (via TUBGCP2) interacts with MZT2A/MZT2B and CDK5RAP2 (via CM1 motif); the interactions play a role in gTuRC activation. Interacts with alpha-beta tubulin heterodimers; the interaction allows microtubules to nucleate from the gTuRC. Interacts with B9D2. Interacts with CDK5RAP2; the interaction is leading to centrosomal localization of TUBG1 and CDK5RAP2. Interacts with CIMAP3. Interacts with SAS6 and NUP62 at the centrosome. Interacts with EML3 (phosphorylated at 'Thr-881') and HAUS8. Interacts with DNM2; this interaction may participate in centrosome cohesion. Interacts with CCDC66. In terms of processing, phosphorylation at Ser-131 by BRSK1 regulates centrosome duplication, possibly by mediating relocation of gamma-tubulin and its associated proteins from the cytoplasm to the centrosome.

Its subcellular location is the cytoplasm. The protein resides in the cytoskeleton. It localises to the microtubule organizing center. The protein localises to the centrosome. It is found in the spindle. Functionally, tubulin is the major constituent of microtubules, protein filaments consisting of alpha- and beta-tubulin heterodimers. Gamma-tubulin is a key component of the gamma-tubulin ring complex (gTuRC) which mediates microtubule nucleation. The gTuRC regulates the minus-end nucleation of alpha-beta tubulin heterodimers that grow into microtubule protafilaments, a critical step in centrosome duplication and spindle formation. This chain is Tubulin gamma-1 chain, found in Homo sapiens (Human).